The sequence spans 1977 residues: Voltage-dependent L-type calcium channel subunit alpha-1F (1977 aa).

Residues 1–11 (MSESEGGKDTT) are compositionally biased toward basic and acidic residues. The segment at 1 to 60 (MSESEGGKDTTPEPSPANGAGPGPEWGLCPGPPAVEGESSGASGLGTPKRRNQHSKHKTV) is disordered. At 1–92 (MSESEGGKDT…RSCISIVEWK (92 aa)) the chain is on the cytoplasmic side. Positions 48-59 (PKRRNQHSKHKT) are enriched in basic residues. The I repeat unit spans residues 79–375 (NPLRRSCISI…LVLGVLSGEF (297 aa)). A helical membrane pass occupies residues 93–111 (PFDILILLTIFANCVALGV). The Extracellular portion of the chain corresponds to 112-129 (YIPFPEDDSNTANHNLEQ). Residues 130–149 (VEYVFLVIFTVETVLKIVAY) form a helical membrane-spanning segment. Residues 150–161 (GLVLHPSAYIRN) are Cytoplasmic-facing. Residues 162-180 (GWNLLDFIIVVVGLFSVLL) traverse the membrane as a helical segment. The Extracellular segment spans residues 181–201 (EQGPGRPGDAPHTGGKPGGFD). The chain crosses the membrane as a helical span at residues 202–220 (VKALRAFRVLRPLRLVSGV). The Cytoplasmic segment spans residues 221-239 (PSLHIVLNSIMKALVPLLH). A helical membrane pass occupies residues 240–259 (IALLVLFVIIIYAIIGLELF). The Extracellular segment spans residues 260-347 (LGRMHKTCYF…WMQDAMGYEL (88 aa)). N-linked (GlcNAc...) asparagine glycosylation is present at Asn-295. Residue Glu-330 coordinates Ca(2+). Residues 348 to 372 (PWVYFVSLVIFGSFFVLNLVLGVLS) traverse the membrane as a helical segment. Over 373-529 (GEFSKEREKA…ARCRRAVKSN (157 aa)) the chain is Cytoplasmic. The interval 395-412 (QQMEEDLRGYLDWITQAE) is binding to the beta subunit. Disordered stretches follow at residues 418 to 441 (DPSA…PQLA) and 455 to 488 (SHST…EDEE). Over residues 455–469 (SHSTRSTHSTSSHAS) the composition is skewed to low complexity. Residues 515-761 (NRVLRARCRR…VFLAIAVDNL (247 aa)) form an II repeat. Residues 530–549 (ACYWAVLLLVFLNTLTIASE) form a helical membrane-spanning segment. Topologically, residues 550–564 (HHGQPVWLTQIQEYA) are extracellular. Residues 565–583 (NKVLLCLFTVEMLLKLYGL) traverse the membrane as a helical segment. Topologically, residues 584 to 591 (GPSAYVSS) are cytoplasmic. The chain crosses the membrane as a helical span at residues 592–610 (FFNRFDCFVVCGGILETTL). Residues 611–620 (VEVGAMQPLG) are Extracellular-facing. A helical transmembrane segment spans residues 621–639 (ISVLRCVRLLRIFKVTRHW). Over 640–658 (ASLSNLVASLLNSMKSIAS) the chain is Cytoplasmic. A helical transmembrane segment spans residues 659–679 (LLLLLFLFIIIFSLLGMQLFG). Residues 680–733 (GKFNFDQTHTKRSTFDTFPQALLTVFQILTGEDWNVVMYDGIMAYGGPFFPGML) are Extracellular-facing. Residue Glu-711 participates in Ca(2+) binding. The helical transmembrane segment at 734–758 (VCIYFIILFICGNYILLNVFLAIAV) threads the bilayer. The Cytoplasmic portion of the chain corresponds to 759 to 871 (DNLASGDAGT…KGCHTLIHHH (113 aa)). Residues 767–830 (GTAKDKGGEK…EEEEEGAGGV (64 aa)) are disordered. The segment covering 768–783 (TAKDKGGEKSNEKDLP) has biased composition (basic and acidic residues). Positions 807–826 (DMEEEEEEEEEEEEEEEEEG) are enriched in acidic residues. Residues 858–1140 (NPLRKGCHTL…IFVGFVIITF (283 aa)) form an III repeat. Residues 872 to 890 (VFTNLILVFIILSSVSLAA) form a helical membrane-spanning segment. Residues 891-906 (EDPIRAHSFRNHILGY) are Extracellular-facing. Residues 907–926 (FDYAFTSIFTVEILLKMTVF) form a helical membrane-spanning segment. At 927 to 938 (GAFLHRGSFCRS) the chain is on the cytoplasmic side. Residues 939–957 (WFNMLDLLVVSVSLISFGI) traverse the membrane as a helical segment. Topologically, residues 958-963 (HSSAIS) are extracellular. A helical membrane pass occupies residues 964 to 983 (VVKILRVLRVLRPLRAINRA). At 984 to 1002 (KGLKHVVQCVFVAIRTIGN) the chain is on the cytoplasmic side. The helical transmembrane segment at 1003-1022 (IMIVTTLLQFMFACIGVQLF) threads the bilayer. At 1023–1112 (KGKFYTCTDE…HGPIYNYRVE (90 aa)) the chain is on the extracellular side. Residues 1060–1150 (RLWVNSDFNF…RAQGEQEYQN (91 aa)) are dihydropyridine binding. Residue Glu-1086 coordinates Ca(2+). Residues 1113 to 1133 (ISVFFIVYIIIIAFFMMNIFV) form a helical membrane-spanning segment. The Cytoplasmic segment spans residues 1134–1190 (GFVIITFRAQGEQEYQNCELDKNQRQCVEYALKAQPLRRYIPKNPHQYRVWATVNSA). The stretch at 1177–1444 (NPHQYRVWAT…LFVAVIMDNF (268 aa)) is one IV repeat. A helical membrane pass occupies residues 1191–1209 (AFEYLMFLLILLNTVALAM). Over 1210-1224 (QHYEQTAPFNYAMDI) the chain is Extracellular. Residues 1225 to 1244 (LNMVFTGLFTIEMVLKIIAF) form a helical membrane-spanning segment. Residues 1245–1251 (KPKHYFT) lie on the Cytoplasmic side of the membrane. Residues 1252 to 1273 (DAWNTFDALIVVGSIVDIAVTE) traverse the membrane as a helical segment. Residues 1274-1290 (VNNGGHLGESSEDSSRI) are Extracellular-facing. Residues 1291 to 1310 (SITFFRLFRVMRLVKLLSKG) form a helical membrane-spanning segment. Over 1311–1329 (EGIRTLLWTFIKSFQALPY) the chain is Cytoplasmic. Residues 1330-1349 (VALLIAMIFFIYAVIGMQMF) form a helical membrane-spanning segment. Residues 1350 to 1416 (GKVALQDGTQ…GEEFTCGSNF (67 aa)) are Extracellular-facing. The dihydropyridine binding stretch occupies residues 1397–1463 (RCDPESDFGP…LGPHHLDEFK (67 aa)). The phenylalkylamine binding stretch occupies residues 1409 to 1452 (EFTCGSNFAIAYFISFFMLCAFLIINLFVAVIMDNFDYLTRDWS). Residues 1417–1441 (AIAYFISFFMLCAFLIINLFVAVIM) traverse the membrane as a helical segment. The Cytoplasmic portion of the chain corresponds to 1442 to 1977 (DNFDYLTRDW…GDEMACVHAL (536 aa)). Disordered stretches follow at residues 1637 to 1754 (CDTE…EVPD) and 1816 to 1841 (DLPI…WATP). Positions 1638-1657 (DTEEEEEEGQEGVEEEDEKD) are enriched in acidic residues. Composition is skewed to polar residues over residues 1661 to 1670 (NKATMVSQPS), 1702 to 1716 (TPTS…AGSN), 1733 to 1743 (GNSQPKGTKGQ), and 1829 to 1840 (SGPNRAQGSWAT).

This sequence belongs to the calcium channel alpha-1 subunit (TC 1.A.1.11) family. CACNA1F subfamily. Voltage-dependent calcium channels are multisubunit complexes, consisting of alpha-1, alpha-2, beta and delta subunits in a 1:1:1:1 ratio. The channel activity is directed by the pore-forming and voltage-sensitive alpha-1 subunit. In many cases, this subunit is sufficient to generate voltage-sensitive calcium channel activity. The auxiliary subunits beta and alpha-2/delta linked by a disulfide bridge regulate the channel activity. Interacts (via IQ domain) with CABP4; in a calcium independent manner. As to quaternary structure, interacts with CABP4; suppresses robust calcium-dependent inactivation of channel without enhancing the hyperpolarized voltage-dependent activation. As to expression, expression in skeletal muscle and retina. Isoform 4 is expressed in retina.

Its subcellular location is the membrane. The enzyme catalyses Ca(2+)(in) = Ca(2+)(out). Functionally, voltage-sensitive calcium channels (VSCC) mediate the entry of calcium ions into excitable cells and are also involved in a variety of calcium-dependent processes, including muscle contraction, hormone or neurotransmitter release, gene expression, cell motility, cell division and cell death. The isoform alpha-1F gives rise to L-type calcium currents. Long-lasting (L-type) calcium channels belong to the 'high-voltage activated' (HVA) group. They are blocked by dihydropyridines (DHP), phenylalkylamines, and by benzothiazepines. Activates at more negative voltages and does not undergo calcium-dependent inactivation (CDI), due to incoming calcium ions, during depolarization. Voltage-dependent L-type calcium channel activates at more hyperpolarized voltages and exhibits a robust calcium-dependent inactivation (CDI), due to incoming calcium ions, during depolarizations. Its function is as follows. Voltage-sensitive calcium channels (VSCC) mediate the entry of calcium ions into excitable cells and are also involved in a variety of calcium-dependent processes, including muscle contraction, hormone or neurotransmitter release, gene expression, cell motility, cell division and cell death. This is Voltage-dependent L-type calcium channel subunit alpha-1F from Homo sapiens (Human).